The sequence spans 311 residues: NAD kinase (311 aa).

Residue Asp-89 is the Proton acceptor of the active site. NAD(+) is bound by residues 89–90, Arg-94, 163–164, Asp-193, and 204–209; these read DG, NE, and TAYAFS.

The protein belongs to the NAD kinase family. Requires a divalent metal cation as cofactor.

It is found in the cytoplasm. It catalyses the reaction NAD(+) + ATP = ADP + NADP(+) + H(+). Functionally, involved in the regulation of the intracellular balance of NAD and NADP, and is a key enzyme in the biosynthesis of NADP. Catalyzes specifically the phosphorylation on 2'-hydroxyl of the adenosine moiety of NAD to yield NADP. The protein is NAD kinase of Mycobacterium leprae (strain Br4923).